Consider the following 164-residue polypeptide: T-cell surface glycoprotein CD3 zeta chain (164 aa).

The signal sequence occupies residues 1–21 (MKWKALFTAAILQAQLPITEA). Residues 22–30 (QSFGLLDPK) lie on the Extracellular side of the membrane. The chain crosses the membrane as a helical span at residues 31–51 (LCYLLDGILFIYGVILTALFL). At 52–164 (RVKFSRSADA…ALHMQALPPR (113 aa)) the chain is on the cytoplasmic side. Ser-58 bears the Phosphoserine mark. ITAM domains follow at residues 61–89 (APAY…LDKR), 100–128 (PQRR…EIGM), and 131–159 (ERRR…LHMQ). Residues Tyr-64, Tyr-72, Tyr-83, Tyr-111, Tyr-123, Tyr-142, and Tyr-153 each carry the phosphotyrosine modification. Basic and acidic residues predominate over residues 83 to 96 (YDVLDKRRGRDPEM). The tract at residues 83 to 111 (YDVLDKRRGRDPEMGGKPQRRKNPQEGLY) is disordered. The interval 128 to 154 (MKGERRRGKGHDGLYQGLSTATKDTYD) is disordered.

Belongs to the CD3Z/FCER1G family. As to quaternary structure, the TCR-CD3 complex is composed of a CD3D/CD3E and a CD3G/CD3E heterodimers that preferentially associate with TCRalpha and TCRbeta, respectively, to form TCRalpha/CD3E/CD3G and TCRbeta/CD3G/CD3E trimers. In turn, the hexamer interacts with CD3Z homodimer to form the TCR-CD3 complex. Alternatively, TCRalpha and TCRbeta can be replaced by TCRgamma and TCRdelta. Interacts with SLA. Interacts with TRAT1. Interacts with DOCK2. Interacts with SLA2. Interacts with SHB. Interacts with ZAP70. Interacts (tyrosine phosphorylated) with SHC1 (via SH2 domain). Interacts with PTPRC. Interacts with CRK; this interaction regulates CD3Z phosphorylation. Interacts (on T cell side) with CD81, ICAM1 and CD9 at immunological synapses between antigen-presenting cells and T cells. Interacts with CD160. Interacts with LY6E. The signaling subunit of immunoglobulin gamma (IgG) Fc receptor complex. As a homodimer or a heterodimer with FCER1G, associates with the ligand binding subunit FCGR3A (via transmembrane domain); this interaction is a prerequisite for Fc receptor complex expression on the cell surface. Interacts with CD5. In terms of assembly, (Microbial infection) Interacts with HIV-1 Nef; this interaction up-regulates the expression of the Fas ligand (FASLG) at the cell surface. (Microbial infection) Interacts with HIV-2 Nef protein; this interaction induces down-regulation of cell surface TCR/CD3 complexes. In terms of processing, phosphorylated on Tyr residues after T-cell receptor triggering by LCK in association with CD4/CD8. As to expression, CD3Z is expressed in normal lymphoid tissue and in peripheral blood mononuclear cells (PBMCs).

Its subcellular location is the cell membrane. Functionally, part of the TCR-CD3 complex present on T-lymphocyte cell surface that plays an essential role in adaptive immune response. When antigen presenting cells (APCs) activate T-cell receptor (TCR), TCR-mediated signals are transmitted across the cell membrane by the CD3 chains CD3D, CD3E, CD3G and CD3Z. All CD3 chains contain immunoreceptor tyrosine-based activation motifs (ITAMs) in their cytoplasmic domain. Upon TCR engagement, these motifs become phosphorylated by Src family protein tyrosine kinases LCK and FYN, resulting in the activation of downstream signaling pathways. CD3Z ITAMs phosphorylation creates multiple docking sites for the protein kinase ZAP70 leading to ZAP70 phosphorylation and its conversion into a catalytically active enzyme. Plays an important role in intrathymic T-cell differentiation. Additionally, participates in the activity-dependent synapse formation of retinal ganglion cells (RGCs) in both the retina and dorsal lateral geniculate nucleus (dLGN). This is T-cell surface glycoprotein CD3 zeta chain (CD247) from Homo sapiens (Human).